The following is a 331-amino-acid chain: Adenosine deaminase (331 aa).

Positions 12 and 14 each coordinate Zn(2+). Residues His-14, Asp-16, and Gly-170 each contribute to the substrate site. Residue His-197 coordinates Zn(2+). The active-site Proton donor is Glu-200. A Zn(2+)-binding site is contributed by Asp-278. A substrate-binding site is contributed by Asp-279.

It belongs to the metallo-dependent hydrolases superfamily. Adenosine and AMP deaminases family. Adenosine deaminase subfamily. Zn(2+) is required as a cofactor.

The enzyme catalyses adenosine + H2O + H(+) = inosine + NH4(+). It catalyses the reaction 2'-deoxyadenosine + H2O + H(+) = 2'-deoxyinosine + NH4(+). In terms of biological role, catalyzes the hydrolytic deamination of adenosine and 2-deoxyadenosine. The chain is Adenosine deaminase from Shewanella baltica (strain OS155 / ATCC BAA-1091).